A 142-amino-acid chain; its full sequence is Large ribosomal subunit protein uL11 (142 aa).

The protein belongs to the universal ribosomal protein uL11 family. As to quaternary structure, part of the ribosomal stalk of the 50S ribosomal subunit. Interacts with L10 and the large rRNA to form the base of the stalk. L10 forms an elongated spine to which L12 dimers bind in a sequential fashion forming a multimeric L10(L12)X complex. In terms of processing, one or more lysine residues are methylated.

In terms of biological role, forms part of the ribosomal stalk which helps the ribosome interact with GTP-bound translation factors. This is Large ribosomal subunit protein uL11 from Acidithiobacillus ferrooxidans (strain ATCC 23270 / DSM 14882 / CIP 104768 / NCIMB 8455) (Ferrobacillus ferrooxidans (strain ATCC 23270)).